A 498-amino-acid chain; its full sequence is Ribulose bisphosphate carboxylase large chain (498 aa).

Residues methionine 1–serine 2 constitute a propeptide that is removed on maturation. Residue proline 3 is modified to N-acetylproline. Lysine 14 bears the N6,N6,N6-trimethyllysine mark. 2 residues coordinate substrate: asparagine 123 and threonine 173. Lysine 175 serves as the catalytic Proton acceptor. Lysine 177 contributes to the substrate binding site. Lysine 201, aspartate 203, and glutamate 204 together coordinate Mg(2+). Lysine 201 is modified (N6-carboxylysine). The active-site Proton acceptor is the histidine 294. 3 residues coordinate substrate: arginine 295, histidine 327, and serine 379. Residues aspartate 473–glycine 498 are disordered.

It belongs to the RuBisCO large chain family. Type I subfamily. As to quaternary structure, heterohexadecamer of 8 large chains and 8 small chains; disulfide-linked. The disulfide link is formed within the large subunit homodimers. Mg(2+) serves as cofactor. In terms of processing, the disulfide bond which can form in the large chain dimeric partners within the hexadecamer appears to be associated with oxidative stress and protein turnover.

It localises to the plastid. It catalyses the reaction 2 (2R)-3-phosphoglycerate + 2 H(+) = D-ribulose 1,5-bisphosphate + CO2 + H2O. It carries out the reaction D-ribulose 1,5-bisphosphate + O2 = 2-phosphoglycolate + (2R)-3-phosphoglycerate + 2 H(+). Its function is as follows. RuBisCO catalyzes two reactions: the carboxylation of D-ribulose 1,5-bisphosphate, the primary event in carbon dioxide fixation, as well as the oxidative fragmentation of the pentose substrate in the photorespiration process. Both reactions occur simultaneously and in competition at the same active site. In Cuscuta exaltata (Tall dodder), this protein is Ribulose bisphosphate carboxylase large chain.